A 553-amino-acid polypeptide reads, in one-letter code: Putative ABC transporter ATP-binding protein BCE_3323 (553 aa).

ABC transporter domains follow at residues 7-245 and 295-527; these read AEIN…FRPF and LSAE…SINR. Residues 41-48 and 329-336 contribute to the ATP site; these read GGSGSGKT and GKNGTGKS.

The protein belongs to the ABC transporter superfamily.

It is found in the cell membrane. In terms of biological role, probably part of an ABC transporter complex. Responsible for energy coupling to the transport system. This Bacillus cereus (strain ATCC 10987 / NRS 248) protein is Putative ABC transporter ATP-binding protein BCE_3323.